The chain runs to 449 residues: Trigger factor (449 aa).

Residues 162–242 (GDFVTIDMTV…VRAVREKQVP (81 aa)) enclose the PPIase FKBP-type domain. The tract at residues 428-449 (APVNLEGGSTPAAEAEPAVSEA) is disordered. Residues 438–449 (PAAEAEPAVSEA) show a composition bias toward low complexity.

It belongs to the FKBP-type PPIase family. Tig subfamily.

Its subcellular location is the cytoplasm. The enzyme catalyses [protein]-peptidylproline (omega=180) = [protein]-peptidylproline (omega=0). In terms of biological role, involved in protein export. Acts as a chaperone by maintaining the newly synthesized protein in an open conformation. Functions as a peptidyl-prolyl cis-trans isomerase. The chain is Trigger factor from Acidothermus cellulolyticus (strain ATCC 43068 / DSM 8971 / 11B).